The primary structure comprises 609 residues: Mitogen-activated protein kinase kinase kinase 3 (609 aa).

Residues 1–202 (MPTWWGRKSC…SAVHGSRIGG (202 aa)) form a disordered region. Over residues 11-28 (KNKDDNHRGIISTDRDIK) the composition is skewed to basic and acidic residues. Low complexity-rich tracts occupy residues 40–64 (PTRGGTPRCSREFAGASSAFSGFDS) and 90–108 (VSGSTSGSTSVSSVSSSGS). Residues 214–470 (WKKGKFLGSG…ASQLLEHPFL (257 aa)) form the Protein kinase domain. ATP contacts are provided by residues 220–228 (LGSGTFGQV) and K243. Catalysis depends on D339, which acts as the Proton acceptor. Disordered regions lie at residues 487-511 (PRSYDGNFSLQPTREPYPGRLSHDN) and 590-609 (MEPSSFRTQTPNSPLRSRLV). The span at 594-609 (SFRTQTPNSPLRSRLV) shows a compositional bias: polar residues.

Belongs to the protein kinase superfamily. STE Ser/Thr protein kinase family. MAP kinase kinase kinase subfamily. Interacts with PBL27. As to expression, expressed in flower buds, roots, leaves, seedlings, stems and immature siliques. Absent of mature pollen.

It catalyses the reaction L-seryl-[protein] + ATP = O-phospho-L-seryl-[protein] + ADP + H(+). It carries out the reaction L-threonyl-[protein] + ATP = O-phospho-L-threonyl-[protein] + ADP + H(+). This chain is Mitogen-activated protein kinase kinase kinase 3, found in Arabidopsis thaliana (Mouse-ear cress).